The chain runs to 511 residues: Phosphoenolpyruvate carboxylase (511 aa).

This sequence belongs to the PEPCase type 2 family. In terms of assembly, homotetramer. Mg(2+) is required as a cofactor.

The catalysed reaction is oxaloacetate + phosphate = phosphoenolpyruvate + hydrogencarbonate. Functionally, catalyzes the irreversible beta-carboxylation of phosphoenolpyruvate (PEP) to form oxaloacetate (OAA), a four-carbon dicarboxylic acid source for the tricarboxylic acid cycle. This Saccharolobus islandicus (strain M.16.27) (Sulfolobus islandicus) protein is Phosphoenolpyruvate carboxylase.